We begin with the raw amino-acid sequence, 43 residues long: Large ribosomal subunit protein bL32 (43 aa).

This sequence belongs to the bacterial ribosomal protein bL32 family.

The chain is Large ribosomal subunit protein bL32 (rpmF) from Carsonella ruddii (strain PV).